We begin with the raw amino-acid sequence, 492 residues long: Probable cytochrome P450 313a3 (492 aa).

Cys-438 provides a ligand contact to heme.

This sequence belongs to the cytochrome P450 family. It depends on heme as a cofactor.

It is found in the endoplasmic reticulum membrane. The protein resides in the microsome membrane. In terms of biological role, may be involved in the metabolism of insect hormones and in the breakdown of synthetic insecticides. The chain is Probable cytochrome P450 313a3 (Cyp313a3) from Drosophila melanogaster (Fruit fly).